The sequence spans 460 residues: Centrosomal protein CEP57L1 (460 aa).

A Phosphoserine modification is found at S49. Coiled-coil stretches lie at residues 51–228 (NSQA…EISK) and 317–384 (ISIC…LKKH). The span at 399 to 410 (KMSEASGIQQED) shows a compositional bias: polar residues. A disordered region spans residues 399–423 (KMSEASGIQQEDSYPKGSKNIKNSP).

This sequence belongs to the translokin family.

The protein resides in the cytoplasm. Its subcellular location is the cytoskeleton. It localises to the microtubule organizing center. The protein localises to the centrosome. In terms of biological role, centrosomal protein which may be required for microtubule attachment to centrosomes. This Homo sapiens (Human) protein is Centrosomal protein CEP57L1 (CEP57L1).